We begin with the raw amino-acid sequence, 282 residues long: RsbT co-antagonist protein RsbRC (282 aa).

Phosphoserine occurs at positions 165 and 174. The 112-residue stretch at 165-276 (SAPVIVLFHS…STLASAIASD (112 aa)) folds into the STAS domain. T186 is modified (phosphothreonine).

Probably present in the stressosome with RsbRA, RsbRB, RsbRD and RsbS. Post-translationally, phosphorylated by RsbT.

In terms of biological role, one of 4 functionally non-identical RsbR paralogs, it functions in the environmental signaling branch of the general stress response. Its function is as follows. Negative regulator of sigma-B activity. Non-phosphorylated RsbS binds to RsbT, preventing its association with RsbU. Requires any one of RsbRA, RsbRB, RsbRC or RsbRD to sequester RsbT. When RsbS and the RsbR paralog(s) are phosphorylated, they release RsbT, which can then bind and activate RsbU. In Bacillus subtilis (strain 168), this protein is RsbT co-antagonist protein RsbRC (rsbRC).